Here is a 345-residue protein sequence, read N- to C-terminus: RDS/peripherin-like protein xRDS36 (345 aa).

Topologically, residues Met-1 to Ser-24 are cytoplasmic. A helical membrane pass occupies residues Trp-25 to Val-43. Over Gln-44–Pro-61 the chain is Lumenal. Residue Asn-54 is glycosylated (N-linked (GlcNAc...) asparagine). Residues Asn-62 to Lys-80 form a helical membrane-spanning segment. Residues Ile-81–Met-99 are Cytoplasmic-facing. Residues Pro-100–Arg-123 form a helical membrane-spanning segment. The Lumenal segment spans residues Gly-124 to Thr-264. N-linked (GlcNAc...) asparagine glycosylation occurs at Asn-229. Residues Asn-265–Met-290 form a helical membrane-spanning segment. Residues Asp-291–Ser-345 are Cytoplasmic-facing.

The protein belongs to the PRPH2/ROM1 family. In terms of assembly, homodimer; disulfide-linked. Rod specific.

The protein resides in the membrane. The sequence is that of RDS/peripherin-like protein xRDS36 (rds36) from Xenopus laevis (African clawed frog).